The primary structure comprises 421 residues: Putative B3 domain-containing protein Os08g0333500 (421 aa).

Positions 1-51 (MTVELEKIAGSFFISKGWKTFVHRTGLLSGQYIRFQVLTPSKINVLLFDKK) form a DNA-binding region, TF-B3. Positions 92-121 (SHTSNKETSSDSRTESMTDIPSSSDNSGET) are disordered. The span at 95–107 (SNKETSSDSRTES) shows a compositional bias: basic and acidic residues. Positions 108–121 (MTDIPSSSDNSGET) are enriched in polar residues.

It localises to the nucleus. The protein is Putative B3 domain-containing protein Os08g0333500 of Oryza sativa subsp. japonica (Rice).